We begin with the raw amino-acid sequence, 476 residues long: ATP synthase subunit beta, mitochondrial (476 aa).

An ATP-binding site is contributed by 156–163 (GAGVGKTV).

As to quaternary structure, F-type ATP synthases have 2 components, the catalytic core F(1) and the membrane-embedded component F(0), linked together by a central stalk and a peripheral stalk. The central stalk, also called rotor shaft, is often seen as part of F(1). The peripheral stalk is seen as part of F(0). F(0) contains the membrane channel next to the rotor. F-type ATP synthases form dimers but each monomer functions independently in ATP generation. The dimer consists of 18 different polypeptides: ATP1 (subunit alpha, part of F(1), 3 molecules per monomer), ATP2 (subunit beta, part of F(1), 3 molecules per monomer), ATP3 (subunit gamma, part of the central stalk), ATP4 (subunit b, part of the peripheral stalk), ATP5/OSCP (subunit 5/OSCP, part of the peripheral stalk), ATP6 (subunit a, part of the peripheral stalk), ATP7 (subunit d, part of the peripheral stalk), ATP8 (subunit 8, part of the peripheral stalk), OLI1 (subunit c, part of the rotor, 10 molecules per monomer), ATP14 (subunit h, part of the peripheral stalk), ATP15 (subunit epsilon, part of the central stalk), ATP16 (subunit delta, part of the central stalk), ATP17 (subunit f, part of the peripheral stalk), ATP18 (subunit i/j, part of the peripheral stalk). Dimer-specific subunits are ATP19 (subunit k, at interface between monomers), ATP20 (subunit g, at interface between monomers), TIM11 (subunit e, at interface between monomers). Also contains subunit L.

It is found in the mitochondrion inner membrane. It carries out the reaction ATP + H2O + 4 H(+)(in) = ADP + phosphate + 5 H(+)(out). Its function is as follows. Mitochondrial membrane ATP synthase (F(1)F(0) ATP synthase or Complex V) produces ATP from ADP in the presence of a proton gradient across the membrane which is generated by electron transport complexes of the respiratory chain. F-type ATP synthases consist of two structural domains, F(1) - containing the extramembraneous catalytic core, and F(0) - containing the membrane proton channel, linked together by a central stalk and a peripheral stalk. During catalysis, ATP synthesis in the catalytic domain of F(1) is coupled via a rotary mechanism of the central stalk subunits to proton translocation. Subunits alpha/ATP1 and beta/ATP2 form the catalytic core in F(1). Rotation of the central stalk against the surrounding alpha/ATP1(3)beta/ATP2(3) subunits leads to hydrolysis of ATP in three separate catalytic sites on the beta/ATP2 subunits. The protein is ATP synthase subunit beta, mitochondrial of Pichia angusta (Yeast).